The chain runs to 332 residues: 4-hydroxythreonine-4-phosphate dehydrogenase (332 aa).

Substrate is bound by residues His138 and Thr139. A divalent metal cation is bound by residues His168, His213, and His269. Substrate-binding residues include Lys277, Asn286, and Arg295.

It belongs to the PdxA family. As to quaternary structure, homodimer. It depends on Zn(2+) as a cofactor. Mg(2+) is required as a cofactor. Co(2+) serves as cofactor.

It localises to the cytoplasm. It catalyses the reaction 4-(phosphooxy)-L-threonine + NAD(+) = 3-amino-2-oxopropyl phosphate + CO2 + NADH. Its pathway is cofactor biosynthesis; pyridoxine 5'-phosphate biosynthesis; pyridoxine 5'-phosphate from D-erythrose 4-phosphate: step 4/5. Functionally, catalyzes the NAD(P)-dependent oxidation of 4-(phosphooxy)-L-threonine (HTP) into 2-amino-3-oxo-4-(phosphooxy)butyric acid which spontaneously decarboxylates to form 3-amino-2-oxopropyl phosphate (AHAP). The chain is 4-hydroxythreonine-4-phosphate dehydrogenase from Vibrio parahaemolyticus serotype O3:K6 (strain RIMD 2210633).